Reading from the N-terminus, the 821-residue chain is Lysosomal beta glucosidase (821 aa).

Positions 1 to 24 are cleaved as a signal peptide; sequence MKTIKSLFLLSLLIVNLLISSTYG. The propeptide occupies 25–69; sequence SSIRVSIVGGEEAEVIEKPRTFGNKRELKLEYSQIYPKKQLNQEN. 3 N-linked (GlcNAc...) asparagine glycosylation sites follow: asparagine 113, asparagine 146, and asparagine 266. The active site involves aspartate 363. Residues asparagine 535, asparagine 555, asparagine 703, and asparagine 721 are each glycosylated (N-linked (GlcNAc...) asparagine).

This sequence belongs to the glycosyl hydrolase 3 family. In terms of processing, glycosylated. The polyoligosaccharides are of the high-mannose type and are highly substituted with both phosphate and sulfate moieties.

The protein resides in the lysosome. The catalysed reaction is Hydrolysis of terminal, non-reducing beta-D-glucosyl residues with release of beta-D-glucose.. The polypeptide is Lysosomal beta glucosidase (gluA) (Dictyostelium discoideum (Social amoeba)).